The following is a 279-amino-acid chain: Digeranylgeranylglyceryl phosphate synthase (279 aa).

The next 6 helical transmembrane spans lie at 27–47 (LIATGTLTPPSLLLAVIVALI), 90–110 (FVGGIAIATLTTTLCLAIAII), 127–147 (VLGNVAVAYLAGSVFLFGGAF), 199–219 (TGIFAFACACGAVAASLLPFG), 222–242 (WGLFYLAGIAVVDLVILFGAF), and 259–279 (TSILRAGMFAALAVFAIAAVI).

This sequence belongs to the UbiA prenyltransferase family. DGGGP synthase subfamily. Mg(2+) serves as cofactor.

It localises to the cell membrane. The catalysed reaction is sn-3-O-(geranylgeranyl)glycerol 1-phosphate + (2E,6E,10E)-geranylgeranyl diphosphate = 2,3-bis-O-(geranylgeranyl)-sn-glycerol 1-phosphate + diphosphate. The protein operates within membrane lipid metabolism; glycerophospholipid metabolism. Functionally, prenyltransferase that catalyzes the transfer of the geranylgeranyl moiety of geranylgeranyl diphosphate (GGPP) to the C2 hydroxyl of (S)-3-O-geranylgeranylglyceryl phosphate (GGGP). This reaction is the second ether-bond-formation step in the biosynthesis of archaeal membrane lipids. This is Digeranylgeranylglyceryl phosphate synthase from Methanoculleus marisnigri (strain ATCC 35101 / DSM 1498 / JR1).